The sequence spans 184 residues: Ras-related protein Rap-1b (184 aa).

Residue 10–18 (GSGGVGKSA) coordinates GTP. The interaction with KRIT1 stretch occupies residues 25–67 (QGIFVEKYDPTIEDSYRKQVEVDAQQCMLEILDTAGTEQFTAM). Positions 32–40 (YDPTIEDSY) match the Effector region motif. GTP-binding positions include 57-61 (DTAGT), 116-119 (NKCD), and 147-149 (SAK). Ser-179 is modified (phosphoserine; by PKA). Cys-181 is modified (cysteine methyl ester). A lipid anchor (S-geranylgeranyl cysteine) is attached at Cys-181. A propeptide spans 182 to 184 (QLL) (removed in mature form).

In terms of assembly, heterodimer with RAP1GAP. Interacts with EPAC2. Interacts with SGSM1. Interacts with SGSM2. Interacts with SGSM3. Interacts with KRIT1. Interacts with RAP1GDS1.

The protein localises to the cell membrane. Its subcellular location is the cytoplasm. The protein resides in the cytosol. It is found in the cell junction. It catalyses the reaction GTP + H2O = GDP + phosphate + H(+). With respect to regulation, activated by guanine nucleotide-exchange factor (GEF) EPAC2 in a cAMP-dependent manner. Functionally, GTP-binding protein that possesses intrinsic GTPase activity. Contributes to the polarizing activity of KRIT1 and CDH5 in the establishment and maintenance of correct endothelial cell polarity and vascular lumen. Required for the localization of phosphorylated PRKCZ, PARD3 and TIAM1 to the cell junction. Plays a role in the establishment of basal endothelial barrier function. This Bos taurus (Bovine) protein is Ras-related protein Rap-1b (RAP1B).